We begin with the raw amino-acid sequence, 361 residues long: 3-dehydroquinate synthase (361 aa).

Residues 71-76 (DGEQNK), 105-109 (GVIGD), 129-130 (TT), K142, K151, and 169-172 (CLNT) contribute to the NAD(+) site. Positions 184, 247, and 264 each coordinate Zn(2+).

It belongs to the sugar phosphate cyclases superfamily. Dehydroquinate synthase family. The cofactor is Co(2+). Zn(2+) is required as a cofactor. Requires NAD(+) as cofactor.

The protein localises to the cytoplasm. It catalyses the reaction 7-phospho-2-dehydro-3-deoxy-D-arabino-heptonate = 3-dehydroquinate + phosphate. Its pathway is metabolic intermediate biosynthesis; chorismate biosynthesis; chorismate from D-erythrose 4-phosphate and phosphoenolpyruvate: step 2/7. Its function is as follows. Catalyzes the conversion of 3-deoxy-D-arabino-heptulosonate 7-phosphate (DAHP) to dehydroquinate (DHQ). The chain is 3-dehydroquinate synthase from Sodalis glossinidius (strain morsitans).